The sequence spans 425 residues: Histone-binding protein RBBP4 (425 aa).

Ala2 is modified (N-acetylalanine). WD repeat units follow at residues 32-125 (YDLV…NHEG), 126-175 (EVNR…RLRG), 176-223 (HQKE…KTIF), 225-270 (GHTA…HSVD), 271-314 (AHTA…HSFE), 315-371 (SHKD…FIHG), and 372-404 (GHTA…VWQM).

This sequence belongs to the WD repeat RBAP46/RBAP48/MSI1 family. Binds directly to histone H4, probably via helix 1 of the histone fold, a region that is not accessible when histone H4 is in chromatin. Forms a large corepressor complex that contains ncor1, sin3a and possibly sin3b, histone deacetylases hdac2, hdac1, rbbp4 and possibly rbbp7.

It is found in the nucleus. The protein resides in the chromosome. It localises to the telomere. Functionally, core histone-binding subunit that may target chromatin assembly factors, chromatin remodeling factors and histone deacetylases to their histone substrates in a manner that is regulated by nucleosomal DNA. Component of several complexes which regulate chromatin metabolism. The polypeptide is Histone-binding protein RBBP4 (rbbp4) (Xenopus tropicalis (Western clawed frog)).